We begin with the raw amino-acid sequence, 1374 residues long: DNA-directed RNA polymerase subunit beta (1374 aa).

This sequence belongs to the RNA polymerase beta chain family. In terms of assembly, the RNAP catalytic core consists of 2 alpha, 1 beta, 1 beta' and 1 omega subunit. When a sigma factor is associated with the core the holoenzyme is formed, which can initiate transcription.

It carries out the reaction RNA(n) + a ribonucleoside 5'-triphosphate = RNA(n+1) + diphosphate. Its function is as follows. DNA-dependent RNA polymerase catalyzes the transcription of DNA into RNA using the four ribonucleoside triphosphates as substrates. In Acidovorax ebreus (strain TPSY) (Diaphorobacter sp. (strain TPSY)), this protein is DNA-directed RNA polymerase subunit beta.